A 133-amino-acid polypeptide reads, in one-letter code: C-C motif chemokine 21b (133 aa).

The N-terminal stretch at 1-23 (MAQMMTLSLLSLVLALCIPWTQG) is a signal peptide. 3 disulfide bridges follow: Cys31–Cys57, Cys32–Cys75, and Cys103–Cys122. The interval 87-133 (MRRLDQPPAPGKQSPGCRKNRGTSKSGKKGKGSKGCKRTEQTQPSRG) is disordered. The tract at residues 98–133 (KQSPGCRKNRGTSKSGKKGKGSKGCKRTEQTQPSRG) is C-terminal basic extension. Over residues 104–122 (RKNRGTSKSGKKGKGSKGC) the composition is skewed to basic residues.

The protein belongs to the intercrine beta (chemokine CC) family. In terms of assembly, binds to CCR7 and to CXCR3. Interacts with PDPN; relocalizes PDPN to the basolateral membrane. Interacts with GPR174. In terms of tissue distribution, expressed strongly in lung, spleen, thymus, peripheral and mesentric lymph nodes. Also expressed in the testis, kidney, liver, and heart.

The protein localises to the secreted. Inhibits hemopoiesis and stimulates chemotaxis. Chemotactic in vitro for thymocytes and activated T-cells, but not for B-cells, macrophages, or neutrophils. Potent mesangial cell chemoattractant. Shows preferential activity towards naive T-cells. May play a role in mediating homing of lymphocytes to secondary lymphoid organs. The sequence is that of C-C motif chemokine 21b (Ccl21b) from Mus musculus (Mouse).